Here is a 326-residue protein sequence, read N- to C-terminus: MLTLARQQQRQNIRWLLCLSVLMLLALLLSLCAGEQWISPGDWSTPRGELFVWQIRLPRTLAVLLVGAALAISGAVMQALFENPLAEPGLLGVSNGAGVGLIAAVLLGQGQLPNWALGLCAIAGALIITLILLRFARRHLSTSRLLLAGVALGIICSALMTWAIYFSTSVDLRQLMYWMMGGFGGVDWRQSWLMLALIPVLLWICCQSRPMNMLALGEISARQLGLPLWFWRNVLVAATGWMVGVSVALAGAIGFIGLVIPHILRLCGLTDHRVLLPGCALAGASALLLADVVARLALAAAELPIGVVTATLGAPVFIWLLLKAGR.

The next 9 helical transmembrane spans lie at 15 to 35 (WLLC…CAGE), 61 to 81 (LAVL…QALF), 88 to 108 (PGLL…VLLG), 112 to 132 (LPNW…TLIL), 146 to 166 (LLAG…AIYF), 184 to 204 (GGVD…LLWI), 240 to 260 (GWMV…GLVI), 274 to 294 (VLLP…DVVA), and 302 to 322 (ELPI…WLLL).

This sequence belongs to the binding-protein-dependent transport system permease family. FecCD subfamily. As to quaternary structure, the complex is composed of two ATP-binding proteins (BtuD), two transmembrane proteins (BtuC) and a solute-binding protein (BtuF).

It localises to the cell inner membrane. Its function is as follows. Part of the ABC transporter complex BtuCDF involved in vitamin B12 import. Involved in the translocation of the substrate across the membrane. This Escherichia coli O17:K52:H18 (strain UMN026 / ExPEC) protein is Vitamin B12 import system permease protein BtuC.